Here is a 510-residue protein sequence, read N- to C-terminus: Bifunctional purine biosynthesis protein PurH (510 aa).

The 145-residue stretch at 1 to 145 folds into the MGS-like domain; that stretch reads MSKRALISVS…KNFEDVLVVT (145 aa).

The protein belongs to the PurH family.

It carries out the reaction (6R)-10-formyltetrahydrofolate + 5-amino-1-(5-phospho-beta-D-ribosyl)imidazole-4-carboxamide = 5-formamido-1-(5-phospho-D-ribosyl)imidazole-4-carboxamide + (6S)-5,6,7,8-tetrahydrofolate. It catalyses the reaction IMP + H2O = 5-formamido-1-(5-phospho-D-ribosyl)imidazole-4-carboxamide. Its pathway is purine metabolism; IMP biosynthesis via de novo pathway; 5-formamido-1-(5-phospho-D-ribosyl)imidazole-4-carboxamide from 5-amino-1-(5-phospho-D-ribosyl)imidazole-4-carboxamide (10-formyl THF route): step 1/1. It functions in the pathway purine metabolism; IMP biosynthesis via de novo pathway; IMP from 5-formamido-1-(5-phospho-D-ribosyl)imidazole-4-carboxamide: step 1/1. This is Bifunctional purine biosynthesis protein PurH from Oceanobacillus iheyensis (strain DSM 14371 / CIP 107618 / JCM 11309 / KCTC 3954 / HTE831).